The following is a 92-amino-acid chain: Small ribosomal subunit protein uS19 (92 aa).

Its function is as follows. Protein S19 forms a complex with S13 that binds strongly to the 16S ribosomal RNA. This is Small ribosomal subunit protein uS19 from Rhodopseudomonas palustris (strain ATCC BAA-98 / CGA009).